We begin with the raw amino-acid sequence, 200 residues long: Recombination protein RecR (200 aa).

The segment at cysteine 57–cysteine 72 adopts a C4-type zinc-finger fold. A Toprim domain is found at threonine 80–proline 175.

It belongs to the RecR family.

May play a role in DNA repair. It seems to be involved in an RecBC-independent recombinational process of DNA repair. It may act with RecF and RecO. In Pseudomonas fluorescens (strain Pf0-1), this protein is Recombination protein RecR.